The following is a 151-amino-acid chain: Ribosome maturation factor RimP (151 aa).

It belongs to the RimP family.

It is found in the cytoplasm. Required for maturation of 30S ribosomal subunits. The sequence is that of Ribosome maturation factor RimP from Saccharophagus degradans (strain 2-40 / ATCC 43961 / DSM 17024).